Here is a 127-residue protein sequence, read N- to C-terminus: Large ribosomal subunit protein bL17 (127 aa).

This sequence belongs to the bacterial ribosomal protein bL17 family. Part of the 50S ribosomal subunit. Contacts protein L32.

The sequence is that of Large ribosomal subunit protein bL17 from Lacticaseibacillus casei (strain BL23) (Lactobacillus casei).